We begin with the raw amino-acid sequence, 581 residues long: Proline--tRNA ligase (581 aa).

Belongs to the class-II aminoacyl-tRNA synthetase family. ProS type 1 subfamily. In terms of assembly, homodimer.

The protein resides in the cytoplasm. It carries out the reaction tRNA(Pro) + L-proline + ATP = L-prolyl-tRNA(Pro) + AMP + diphosphate. In terms of biological role, catalyzes the attachment of proline to tRNA(Pro) in a two-step reaction: proline is first activated by ATP to form Pro-AMP and then transferred to the acceptor end of tRNA(Pro). As ProRS can inadvertently accommodate and process non-cognate amino acids such as alanine and cysteine, to avoid such errors it has two additional distinct editing activities against alanine. One activity is designated as 'pretransfer' editing and involves the tRNA(Pro)-independent hydrolysis of activated Ala-AMP. The other activity is designated 'posttransfer' editing and involves deacylation of mischarged Ala-tRNA(Pro). The misacylated Cys-tRNA(Pro) is not edited by ProRS. In Rhodococcus opacus (strain B4), this protein is Proline--tRNA ligase.